The following is an 88-amino-acid chain: UPF0223 protein BH2638 (88 aa).

This sequence belongs to the UPF0223 family.

The protein is UPF0223 protein BH2638 of Halalkalibacterium halodurans (strain ATCC BAA-125 / DSM 18197 / FERM 7344 / JCM 9153 / C-125) (Bacillus halodurans).